The primary structure comprises 512 residues: Rab11 family-interacting protein 2 (512 aa).

Residues 1-120 (MMLSEQAQKW…DKQRRKTEWF (120 aa)) form the C2 domain. The segment at 15-102 (VQVTVLQAKD…GLDKFLGQVA (88 aa)) is necessary for its cellular translocation to the plasma membrane. Disordered stretches follow at residues 174-231 (RKSD…MSDL) and 263-287 (PESG…NQPG). Polar residues-rich tracts occupy residues 221 to 231 (RLSSAHSMSDL) and 277 to 287 (SFDTSKLNQPG). At S227 the chain carries Phosphoserine; by MARK2. Position 277 is a phosphoserine (S277). The short motif at 323–325 (NPF) is the NPF 1 element. A compositionally biased stretch (basic and acidic residues) spans 347-374 (KESKREKREKVSLFERVTGKRDSRRPDK). A disordered region spans residues 347 to 390 (KESKREKREKVSLFERVTGKRDSRRPDKLNNGGSDSPCDLKSPS). Short sequence motifs (NPF) lie at residues 406 to 408 (NPF) and 440 to 442 (NPF). The FIP-RBD domain occupies 437–499 (PDNNPFDATA…EETPSILRVP (63 aa)). The necessary for interaction with AP2A1, RAB11A, subcellular location, endocytosis activity and homooligomerization stretch occupies residues 465-512 (ELLRRKDTHIRELEDYIDNLLVRVMEETPSILRVPYEPSRKAGKFTNS).

As to quaternary structure, homooligomerizes in a Rab11-independent manner. Forms a heterooligomeric complex with RAB11FIP4. Interacts with AP2A1, MYO5B, RAB25 and REPS1. Interacts with RAB11A and RAB11B (activated GTP-bound form). Interacts with NPC1L1. Interacts (via NPF motifs) with EHD1 and EHD3. Interacts with TICAM2; this interaction directs RAB11FIP2 to the phagosome. Interacts with RAB14 and RAB25 (GTP-bound forms). Phosphorylation at Ser-227 by MARK2 regulates epithelial cell polarity.

Its subcellular location is the cell membrane. The protein localises to the recycling endosome membrane. Its function is as follows. A Rab11 effector binding preferentially phosphatidylinositol 3,4,5-trisphosphate (PtdInsP3) and phosphatidic acid (PA) and acting in the regulation of the transport of vesicles from the endosomal recycling compartment (ERC) to the plasma membrane. Involved in insulin granule exocytosis. Also involved in receptor-mediated endocytosis and membrane trafficking of recycling endosomes, probably originating from clathrin-coated vesicles. Required in a complex with MYO5B and RAB11 for the transport of NPC1L1 to the plasma membrane. Also acts as a regulator of cell polarity. Plays an essential role in phagocytosis through a mechanism involving TICAM2, RAC1 and CDC42 Rho GTPases for controlling actin-dynamics. This chain is Rab11 family-interacting protein 2 (Rab11fip2), found in Mus musculus (Mouse).